Reading from the N-terminus, the 441-residue chain is Acidic phosphoprotein (441 aa).

The or 24 signal peptide spans 1–15; the sequence is MKAISLGLISSIIFS. N-linked (GlcNAc...) asparagine glycosylation is found at Asn-21 and Asn-112. 18 repeat units span residues 186–193, 194–201, 202–209, 210–217, 218–225, 226–233, 234–241, 242–249, 250–257, 258–265, 266–273, 274–281, 282–289, 290–297, 298–305, 306–313, 353–360, and 361–368. The interval 186-313 is 16 X 8 AA tandem repeats; sequence EEDPYLLQEE…SNEAGEGTAN (128 aa). A disordered region spans residues 232–416; that stretch reads LNEEDAGTTN…EKEKKKEKKV (185 aa). Positions 238–247 are enriched in low complexity; it reads GTTNEAGEGT. Residues 248–273 show a composition bias toward acidic residues; it reads TNEEGEGAANEYDAETLNEYDADTLN. The span at 294–306 shows a compositional bias: polar residues; that stretch reads STTNEAGEGTSNE. Residues 312–332 show a composition bias toward acidic residues; the sequence is ANDDEELDEEVASIFDDDEHA. Over residues 349–371 the composition is skewed to basic and acidic residues; sequence ENVKKGNENEGEQKGNENEGEQK. A 2 X 9 AA tandem repeats region spans residues 353-370; it reads KGNENEGEQKGNENEGEQ. The span at 372 to 415 shows a compositional bias: basic residues; the sequence is GKKKKAKEKSKKKVKNKPTMTTKKKKKKEKKKKKKEKEKKKEKK.

It localises to the cell membrane. During infection, this phosphoprotein probably modulates the structure of the red cell membrane to the advantage of the parasite, although its precise function is not known. The polypeptide is Acidic phosphoprotein (PCEMA1) (Plasmodium chabaudi).